The chain runs to 59 residues: uncharacterized protein (59 aa).

A helical membrane pass occupies residues 6-26 (WWLVVFAVFVFLFDTLLMQWI).

Its subcellular location is the membrane. This is an uncharacterized protein from Escherichia coli O157:H7.